A 477-amino-acid polypeptide reads, in one-letter code: Serine/threonine-protein kinase pakC (477 aa).

Residues 13–108 (SPDKEGELKK…WMKAVEKGSE (96 aa)) form the PH domain. The region spanning 112–125 (VSQPFNLKHEVHVD) is the CRIB domain. Residues 204–458 (YKNMTKIGEG…ATDLLKHPFM (255 aa)) enclose the Protein kinase domain. ATP-binding positions include 210–218 (IGEGAAGEV) and Lys233. Asp326 serves as the catalytic Proton acceptor.

This sequence belongs to the protein kinase superfamily. STE Ser/Thr protein kinase family. STE20 subfamily. In terms of assembly, interacts with GTP-bound racB. Requires Mg(2+) as cofactor.

The protein resides in the cytoplasm. It localises to the membrane. The enzyme catalyses L-seryl-[protein] + ATP = O-phospho-L-seryl-[protein] + ADP + H(+). It carries out the reaction L-threonyl-[protein] + ATP = O-phospho-L-threonyl-[protein] + ADP + H(+). With respect to regulation, kinase activity is rapidly and transiently increased in response to chemoattractant stimulation. In terms of biological role, has role in the regulation of chemotaxis. This is Serine/threonine-protein kinase pakC (pakC) from Dictyostelium discoideum (Social amoeba).